Consider the following 23-residue polypeptide: Dermaseptin III-like peptide (23 aa).

In terms of tissue distribution, expressed by the skin glands.

It is found in the secreted. Possesses a potent antimicrobial activity against bacteria, fungi and protozoa. Probably acts by disturbing membrane functions with its amphipathic structure. This chain is Dermaseptin III-like peptide, found in Phyllomedusa burmeisteri (Brazilian common walking leaf frog).